We begin with the raw amino-acid sequence, 472 residues long: Adenosylhomocysteinase (472 aa).

Positions 62, 137, and 197 each coordinate substrate. 198-200 (TTT) provides a ligand contact to NAD(+). 2 residues coordinate substrate: Lys227 and Asp231. NAD(+) contacts are provided by residues Asn232, 261–266 (GYGDVG), Glu284, Asn319, 340–342 (IGH), and Asn385.

This sequence belongs to the adenosylhomocysteinase family. Requires NAD(+) as cofactor.

It is found in the cytoplasm. It carries out the reaction S-adenosyl-L-homocysteine + H2O = L-homocysteine + adenosine. The protein operates within amino-acid biosynthesis; L-homocysteine biosynthesis; L-homocysteine from S-adenosyl-L-homocysteine: step 1/1. May play a key role in the regulation of the intracellular concentration of adenosylhomocysteine. The polypeptide is Adenosylhomocysteinase (Bordetella petrii (strain ATCC BAA-461 / DSM 12804 / CCUG 43448)).